The following is a 147-amino-acid chain: Large ribosomal subunit protein bL21 (147 aa).

Residues 115-147 (KSIKVGKPTPKSSSKKEETVKKETKPKSEKSTN) form a disordered region. A compositionally biased stretch (basic and acidic residues) spans 128 to 147 (SKKEETVKKETKPKSEKSTN).

It belongs to the bacterial ribosomal protein bL21 family. As to quaternary structure, part of the 50S ribosomal subunit. Contacts protein L20.

Functionally, this protein binds to 23S rRNA in the presence of protein L20. This chain is Large ribosomal subunit protein bL21, found in Prochlorococcus marinus (strain MIT 9215).